Here is a 542-residue protein sequence, read N- to C-terminus: Beta-fructofuranosidase, insoluble isoenzyme 5 (542 aa).

Residues 50–53 (WQND), Gln69, Trp77, and 114–115 (WS) contribute to the substrate site. Asp53 is an active-site residue. Asn142 is a glycosylation site (N-linked (GlcNAc...) asparagine). Substrate-binding positions include 178–179 (RD) and Glu233. A disulfide bridge connects residues Cys389 and Cys436. 2 N-linked (GlcNAc...) asparagine glycosylation sites follow: Asn510 and Asn516.

This sequence belongs to the glycosyl hydrolase 32 family. As to expression, expressed in roots and leaves.

The protein localises to the secreted. It is found in the extracellular space. It localises to the apoplast. Its subcellular location is the cell wall. The catalysed reaction is Hydrolysis of terminal non-reducing beta-D-fructofuranoside residues in beta-D-fructofuranosides.. May play a role in stress response. In Oryza sativa subsp. japonica (Rice), this protein is Beta-fructofuranosidase, insoluble isoenzyme 5 (CIN5).